We begin with the raw amino-acid sequence, 438 residues long: Protein phosphatase 2C homolog 2 (438 aa).

The PPM-type phosphatase domain occupies 23 to 294; sequence IYGVSAMQGW…DNMTMVIIGF (272 aa). Mn(2+)-binding residues include D67, G68, D236, and D285. A disordered region spans residues 370-438; the sequence is VLTGSDDTEM…EKTPEESKKD (69 aa). Acidic residues predominate over residues 375-387; sequence DDTEMFDNADEDK. Residues 398-438 show a composition bias toward basic and acidic residues; it reads GKTDAKEETEAKPAPEAESSKPADGSEKKQDEKTPEESKKD.

It belongs to the PP2C family. Requires Mg(2+) as cofactor. It depends on Mn(2+) as a cofactor.

Its subcellular location is the cytoplasm. The protein localises to the nucleus. It carries out the reaction O-phospho-L-seryl-[protein] + H2O = L-seryl-[protein] + phosphate. The enzyme catalyses O-phospho-L-threonyl-[protein] + H2O = L-threonyl-[protein] + phosphate. Dephosphorylating regulator for many key proteins. Negatively regulates the endoplasmic reticulum unfolded protein response. This is Protein phosphatase 2C homolog 2 from Hypocrea jecorina (strain QM6a) (Trichoderma reesei).